The sequence spans 77 residues: Omega-conotoxin-like SO-5 (77 aa).

An N-terminal signal peptide occupies residues 1–22; sequence MKLTCVMIVAVLLLTACQLITA. The propeptide occupies 23–42; the sequence is DDSRGTQKHRSLRSTTKVSK. Disulfide bonds link C46–C61, C53–C64, and C60–C71.

Belongs to the conotoxin O1 superfamily. In terms of tissue distribution, expressed by the venom duct.

The protein resides in the secreted. Functionally, omega-conotoxins act at presynaptic membranes, they bind and block voltage-gated calcium channels (Cav). This Conus striatus (Striated cone) protein is Omega-conotoxin-like SO-5 (SO5).